A 949-amino-acid chain; its full sequence is Valine--tRNA ligase (949 aa).

The 'HIGH' region motif lies at 40–50 (PNVTGSLHMGH). Positions 553 to 557 (KMSKS) match the 'KMSKS' region motif. Lysine 556 provides a ligand contact to ATP. The stretch at 877–949 (MAGLIDKEAE…QEQQDKIKAL (73 aa)) forms a coiled coil.

The protein belongs to the class-I aminoacyl-tRNA synthetase family. ValS type 1 subfamily. Monomer.

The protein localises to the cytoplasm. It catalyses the reaction tRNA(Val) + L-valine + ATP = L-valyl-tRNA(Val) + AMP + diphosphate. In terms of biological role, catalyzes the attachment of valine to tRNA(Val). As ValRS can inadvertently accommodate and process structurally similar amino acids such as threonine, to avoid such errors, it has a 'posttransfer' editing activity that hydrolyzes mischarged Thr-tRNA(Val) in a tRNA-dependent manner. The chain is Valine--tRNA ligase from Idiomarina loihiensis (strain ATCC BAA-735 / DSM 15497 / L2-TR).